A 679-amino-acid chain; its full sequence is Leucine-rich repeat, immunoglobulin-like domain and transmembrane domain-containing protein 3 (679 aa).

An N-terminal signal peptide occupies residues 1–19 (MHLFACLCIVLSFLEGVGC). Residues 20-582 (LCPSQCTCDY…RVEGDDSQWS (563 aa)) lie on the Lumenal side of the membrane. LRR repeat units lie at residues 56 to 79 (PVDT…AFYY), 80 to 103 (LVEL…SFYN), 104 to 128 (LKQL…LLDM), 129 to 151 (PLLR…ALRY), and 152 to 175 (LKNL…FLES). The LRRCT domain occupies 201-253 (NPWFCDCHISKMIELSKVVDPAIVLLDPLMTCSEPERLTGILFQRAELEHCLK). Residues 254–344 (PSVMTSATKI…GMSEAVVTVT (91 aa)) enclose the Ig-like domain. A disulfide bridge links Cys275 with Cys328. The N-linked (GlcNAc...) asparagine glycan is linked to Asn296. Positions 351–375 (TPIPPDTSERTGDHPEWDVQPGSGR) are disordered. Basic and acidic residues predominate over residues 357–367 (TSERTGDHPEW). In terms of domain architecture, Fibronectin type-III spans 486–574 (AIENLRVVSE…QCITFSTERV (89 aa)). A helical transmembrane segment spans residues 583-603 (LLLVVTSTACVVILPLICFLL). Topologically, residues 604–679 (YKVCKLQCKS…SEGSRPEYYC (76 aa)) are cytoplasmic.

In terms of processing, glycosylated. In terms of tissue distribution, detected in the outer plexiform layer (OPL) of the retina where it localizes to ON-bipolar cells (at protein level).

It localises to the cell projection. The protein resides in the dendrite. The protein localises to the perikaryon. It is found in the endoplasmic reticulum membrane. In terms of biological role, plays a role in the synapse formation and synaptic transmission between cone photoreceptor cells and retinal bipolar cells. Required for normal transmission of a light-evoked stimulus from the cone photoreceptor cells to the ON-bipolar cells and ON-ganglion cells in the inner retina. Required in retinal ON-bipolar cells for normal localization of the cation channel TRPM1 at dendrite tips. Seems to play a specific role in synaptic contacts made by ON-bipolar cells with cone photoreceptor pedicles. May also have a role in cone synapse formation. Might facilitate FGFR1 exit from the endoplasmic reticulum to the Golgi. Could be a regulator of the FGFRs. This Homo sapiens (Human) protein is Leucine-rich repeat, immunoglobulin-like domain and transmembrane domain-containing protein 3 (LRIT3).